Consider the following 318-residue polypeptide: Thiohydrolase aneE (318 aa).

It belongs to the polyketide transferase af380 family.

It catalyses the reaction aculene D + L-prolyl-[peptidyl-carrier protein] = aculene B + holo-[peptidyl-carrier protein]. It carries out the reaction aculene C + L-prolyl-[peptidyl-carrier protein] = aculene A + holo-[peptidyl-carrier protein]. It participates in secondary metabolite biosynthesis. Its function is as follows. Thiohydrolase; part of the gene cluster that mediates the biosynthesis of aculenes, a unique type of norsesquiterpenes that contain a nordaucane skeleton linked to an L-proline moiety and are of mixed biosynthetic origin. The pathway begins with the synthesis of dauca-4,7-diene by the terpene cyclase aneC using farnesyl pyrophosphate (FPP) as substrate. The cytochrome P450 monooxygenase aneF then performs the initial oxidation at C-12 of dauca-4,7-diene to yield asperaculane D. Asperaculane D is substrate of the cytochrome P450 monooxygenase aneD for C-10 hydroxylation to yield asperaculane E. The cytochrome P450 monooxygenase aneG then converts asperaculane E into aculene D via C-2 oxidation. The monomodular nonribosomal peptide synthtase aneB adenylates L-proline and the thiohydrolase aneE transfers this activated L-proline derivative to aculenes D and C to produce respectively aculenes B and A. The dioxygenase aneA converts aculene D into aculene C, and aculene B into aculene A by introducing the 5,6-alkene moiety. Asperculanes A, B, C and F, as well as 14-prolyl asperculane C, might be shunt products of the pathway. In Aspergillus aculeatus (strain ATCC 16872 / CBS 172.66 / WB 5094), this protein is Thiohydrolase aneE.